Reading from the N-terminus, the 347-residue chain is Pre-B-cell leukemia transcription factor 1 (347 aa).

Positions Met-1–Val-37 are disordered. The PBC domain maps to Gly-38–Asp-232. The tract at residues Asp-45–Gly-124 is PBC-A. The PBC-B stretch occupies residues Ala-127 to Asp-232. The homeobox; TALE-type DNA-binding region spans Ala-233–Ile-295. Positions Val-318–Ser-331 are enriched in polar residues. The tract at residues Val-318–Gln-347 is disordered.

It belongs to the TALE/PBX homeobox family. In terms of assembly, forms a heterodimer with isoform 2 of meis1; the interaction is necessary for neural fate induction. In terms of tissue distribution, shows broad, weak expression from blastula through gastrula stages. At stage 14/15, expressed in a broad arc that gives rise to the forebrain and eyes. More intensely expressed in the lateral neural folds (presumptive neural crest) and as horizontal stripes in the posterior neural plate that give rise to the hindbrain. As development proceeds, expression progresses posteriorly along the neural folds and at stage 21, expression is pronounced in the prospective hindbrain and in migratory neural crest cells. At later stages (stage 26), expression becomes intense within the dorsal portion of the forebrain, and in the optic cup, caudal branchial arch, peripheral to the pronephric anlage, and in the dorsal anterior half of the spinal cord. Expression remains robust in the hindbrain but gradually becomes more restricted. At stage 28, expressed in the dorsal lateral portion of the neural tube and in the somatic layer of the lateral plate mesoderm that surrounds the pronephric anlage.

The protein resides in the nucleus. In terms of biological role, acts as a transcriptional activator in complex with isoform 2 of meis1, to induce posterior neural and neural crest gene expression, and thereby specify hindbrain and neural crest cell fate. Binds to a highly conserved region in the promoter of the neural crest gene zic3. Required for the nuclear transport or retention of isoform 2 of meis1. This is Pre-B-cell leukemia transcription factor 1 (pbx1) from Xenopus laevis (African clawed frog).